A 30-amino-acid chain; its full sequence is U1-poneritoxin-Ni3b (30 aa).

Belongs to the ponericin-G family. Expressed by the venom gland.

The protein localises to the secreted. Functionally, shows a broad spectrum of activity against both Gram-positive and Gram-negative bacteria. Also has antimicrobial activity against S.cerevisiae. Has insecticidal and non-hemolytic activity. The protein is U1-poneritoxin-Ni3b of Neoponera inversa (Ant).